The primary structure comprises 84 residues: Kappa-scoloptoxin(11)-Ssm3a (84 aa).

The signal sequence occupies residues 1 to 16 (MSWMFYSFIVFTLAIK).

The protein belongs to the scoloptoxin-11 family. Post-translationally, contains 2 disulfide bonds. Expressed by the venom gland.

Its subcellular location is the secreted. Inhibits voltage-gated potassium channel currents in DRG neurons. 200 nM of the toxin inhibits current amplitude by only 25% and even at concentrations up to 5 uM, the toxin does not inhibit all potassium currents. In vivo, insects injected with this toxin showed signs of neurotoxicity including twitching, paralysis, and body contraction. The polypeptide is Kappa-scoloptoxin(11)-Ssm3a (Scolopendra mutilans (Chinese red-headed centipede)).